The sequence spans 439 residues: GTPase Der (439 aa).

EngA-type G domains are found at residues 4 to 168 (PIVA…KDDE) and 177 to 352 (INIA…DNYN). GTP contacts are provided by residues 10–17 (GRPNVGKS), 57–61 (DTGGI), 120–123 (NKID), 183–190 (GKPNVGKS), 230–234 (DTAGL), and 295–298 (NKWD). The KH-like domain maps to 353–437 (KRVKTGVLND…GIKSEFRERK (85 aa)).

This sequence belongs to the TRAFAC class TrmE-Era-EngA-EngB-Septin-like GTPase superfamily. EngA (Der) GTPase family. Associates with the 50S ribosomal subunit.

In terms of biological role, GTPase that plays an essential role in the late steps of ribosome biogenesis. This is GTPase Der from Clostridium botulinum (strain ATCC 19397 / Type A).